We begin with the raw amino-acid sequence, 151 residues long: Aspartate 1-decarboxylase (151 aa).

Catalysis depends on Ser-26, which acts as the Schiff-base intermediate with substrate; via pyruvic acid. Ser-26 is subject to Pyruvic acid (Ser). Thr-58 serves as a coordination point for substrate. Tyr-59 acts as the Proton donor in catalysis. 74–76 (GGA) contacts substrate.

This sequence belongs to the PanD family. In terms of assembly, heterooctamer of four alpha and four beta subunits. Pyruvate is required as a cofactor. In terms of processing, is synthesized initially as an inactive proenzyme, which is activated by self-cleavage at a specific serine bond to produce a beta-subunit with a hydroxyl group at its C-terminus and an alpha-subunit with a pyruvoyl group at its N-terminus.

The protein localises to the cytoplasm. The enzyme catalyses L-aspartate + H(+) = beta-alanine + CO2. The protein operates within cofactor biosynthesis; (R)-pantothenate biosynthesis; beta-alanine from L-aspartate: step 1/1. Catalyzes the pyruvoyl-dependent decarboxylation of aspartate to produce beta-alanine. This Crocosphaera subtropica (strain ATCC 51142 / BH68) (Cyanothece sp. (strain ATCC 51142)) protein is Aspartate 1-decarboxylase.